Consider the following 422-residue polypeptide: MVDWDKEAQRFRQRRQEAEKQEELASSEGQADEPSDDPGLSQALPQKHLGLEDKQQGLPNEEEAKGEDFAKDQEQKHKKTFNHRKYINWTYLSRSKNKKLQLKSVSWSRLILAAAFLFMIIFSAFWLSPLNRIATIEVSGNNIVPQEQILYGSGLRENMTYLGIESKTGVVDNRLKQLFPSVRSVQLNAKGNRTVEVNVQEFRAIGYVKKQDFYYPVLENHIMLDGAIPYLDQDIPLFTGFEDQELLHLANQLSKLSDDLLAKINEVVNISDDNYPNHIALKMEDGNIVVGFIDSIADRMQYYDQIVSELEGKTGVINMEVGSYFQEKNPLNDPFASPEEKASYQEKVDQAKEKSKEKQAKADKHSSESKLGDKPKPRGEQSGASEEVTSSQRQTSSQSSPRPGTNSSQQSSTVTQTRSSNS.

Basic and acidic residues-rich tracts occupy residues 1-23 (MVDW…KQEE) and 62-75 (EEAK…DQEQ). The interval 1 to 77 (MVDWDKEAQR…DFAKDQEQKH (77 aa)) is disordered. Residues 1–109 (MVDWDKEAQR…LQLKSVSWSR (109 aa)) are Cytoplasmic-facing. Residues 110 to 130 (LILAAAFLFMIIFSAFWLSPL) traverse the membrane as a helical segment. The 72-residue stretch at 131–202 (NRIATIEVSG…RTVEVNVQEF (72 aa)) folds into the POTRA domain. Residues 131–422 (NRIATIEVSG…TVTQTRSSNS (292 aa)) are Extracellular-facing. Residues 329 to 422 (NPLNDPFASP…TVTQTRSSNS (94 aa)) are disordered. Residues 338-379 (PEEKASYQEKVDQAKEKSKEKQAKADKHSSESKLGDKPKPRG) show a composition bias toward basic and acidic residues. Positions 389–422 (TSSQRQTSSQSSPRPGTNSSQQSSTVTQTRSSNS) are enriched in low complexity.

It belongs to the FtsQ/DivIB family. DivIB subfamily.

The protein localises to the cell membrane. In terms of biological role, cell division protein that may be involved in stabilizing or promoting the assembly of the division complex. This Aerococcus urinae (strain CCUG 59500 / ACS-120-V-Col10a) protein is Cell division protein DivIB.